The sequence spans 412 residues: Translation initiation factor 2 subunit gamma (412 aa).

The region spanning 8 to 205 (QAEMNIGMVG…AMYEHFEPPE (198 aa)) is the tr-type G domain. The tract at residues 17–24 (GHVDHGKT) is G1. 4 residues coordinate Mg(2+): Asp20, Thr24, Gly45, and Ser47. 20–25 (DHGKTT) is a GTP binding site. The segment at 45 to 49 (GISIR) is G2. 4 residues coordinate Zn(2+): Cys60, Cys63, Cys72, and Cys75. A G3 region spans residues 89 to 92 (DSPG). Residues 145–148 (NKID) and 183–185 (SAQ) contribute to the GTP site. The G4 stretch occupies residues 145-148 (NKID). Residues 183–185 (SAQ) form a G5 region.

Belongs to the TRAFAC class translation factor GTPase superfamily. Classic translation factor GTPase family. EIF2G subfamily. As to quaternary structure, heterotrimer composed of an alpha, a beta and a gamma chain. Requires Mg(2+) as cofactor.

The catalysed reaction is GTP + H2O = GDP + phosphate + H(+). EIF-2 functions in the early steps of protein synthesis by forming a ternary complex with GTP and initiator tRNA. The chain is Translation initiation factor 2 subunit gamma from Methanopyrus kandleri (strain AV19 / DSM 6324 / JCM 9639 / NBRC 100938).